A 183-amino-acid polypeptide reads, in one-letter code: NADH-quinone oxidoreductase subunit I (183 aa).

4Fe-4S ferredoxin-type domains lie at 71-100 (KRDEQGRENCTACGLCALSCPAEAITMKAA) and 117-146 (EIYEINMLRCIFCGLCEEACPKDAIYLTTS). [4Fe-4S] cluster-binding residues include C80, C83, C86, C90, C126, C129, C132, and C136.

The protein belongs to the complex I 23 kDa subunit family. NDH-1 is composed of 14 different subunits. Subunits NuoA, H, J, K, L, M, N constitute the membrane sector of the complex. [4Fe-4S] cluster is required as a cofactor.

It is found in the cell inner membrane. The enzyme catalyses a quinone + NADH + 5 H(+)(in) = a quinol + NAD(+) + 4 H(+)(out). Its function is as follows. NDH-1 shuttles electrons from NADH, via FMN and iron-sulfur (Fe-S) centers, to quinones in the respiratory chain. The immediate electron acceptor for the enzyme in this species is believed to be ubiquinone. Couples the redox reaction to proton translocation (for every two electrons transferred, four hydrogen ions are translocated across the cytoplasmic membrane), and thus conserves the redox energy in a proton gradient. This is NADH-quinone oxidoreductase subunit I from Flavobacterium psychrophilum (strain ATCC 49511 / DSM 21280 / CIP 103535 / JIP02/86).